The chain runs to 309 residues: High-affinity zinc uptake system protein AztC (309 aa).

Residues 1–24 form the signal peptide; it reads MKDWLFRIATCSIMTFSSLAAAQA. H61 serves as a coordination point for Zn(2+). Positions 117–132 are D-loop; the sequence is GGGHYHYIDGKAVFHA. Position 138 (H138) interacts with Zn(2+). Residues C158 and C165 are joined by a disulfide bond. H204 is a binding site for Zn(2+). The segment at 222–229 is Z-loop; it reads QGVSTESE. D279 serves as a coordination point for Zn(2+).

The protein belongs to the bacterial solute-binding protein 9 family. Monomer.

Its subcellular location is the periplasm. In terms of biological role, part of the ATP-binding cassette (ABC) transport system AztABCD involved in zinc import. Binds zinc with high affinity and specificity and delivers it to the membrane permease for translocation into the cytoplasm. In Paracoccus denitrificans (strain Pd 1222), this protein is High-affinity zinc uptake system protein AztC.